A 205-amino-acid polypeptide reads, in one-letter code: Helix-loop-helix protein 4 (205 aa).

Residues 3–16 (MVVAKRNARERTRV) are basic motif. In terms of domain architecture, bHLH spans 3–56 (MVVAKRNARERTRVHTVNQAFLVLKQHLPSLRQFTKRVSKLRILNAAITYIDTL). The helix-loop-helix motif stretch occupies residues 17-56 (HTVNQAFLVLKQHLPSLRQFTKRVSKLRILNAAITYIDTL).

As to expression, expressed in the ADL sensory neurons.

The protein localises to the nucleus. Acts as a transcriptional regulator. May mediate transcriptional activation by binding to the E-box motif 5'-CANNTG-3'. Required for the correct morphology, terminal identity and function of the ADL sensory neurons by controlling the expression of the ADL-specific gene repertoire, including chemoreceptor encoding genes, ion channel encoding genes, neuropeptides and the neurotransmitter eat-4. Regulates the expression of the srh-234 chemoreceptor encoding gene in the ADL neurons under feeding conditions. Plays a role in the chemorepulsive response toward ascaroside pheromones mediated by the ADL sensory neurons. The sequence is that of Helix-loop-helix protein 4 (hlh-4) from Caenorhabditis elegans.